Reading from the N-terminus, the 960-residue chain is Glycine dehydrogenase (decarboxylating) (960 aa).

Lys-709 is modified (N6-(pyridoxal phosphate)lysine).

It belongs to the GcvP family. The glycine cleavage system is composed of four proteins: P, T, L and H. Pyridoxal 5'-phosphate is required as a cofactor.

It catalyses the reaction N(6)-[(R)-lipoyl]-L-lysyl-[glycine-cleavage complex H protein] + glycine + H(+) = N(6)-[(R)-S(8)-aminomethyldihydrolipoyl]-L-lysyl-[glycine-cleavage complex H protein] + CO2. In terms of biological role, the glycine cleavage system catalyzes the degradation of glycine. The P protein binds the alpha-amino group of glycine through its pyridoxal phosphate cofactor; CO(2) is released and the remaining methylamine moiety is then transferred to the lipoamide cofactor of the H protein. This Hahella chejuensis (strain KCTC 2396) protein is Glycine dehydrogenase (decarboxylating).